The sequence spans 122 residues: Large ribosomal subunit protein uL14 (122 aa).

It belongs to the universal ribosomal protein uL14 family. As to quaternary structure, part of the 50S ribosomal subunit. Forms a cluster with proteins L3 and L19. In the 70S ribosome, L14 and L19 interact and together make contacts with the 16S rRNA in bridges B5 and B8.

In terms of biological role, binds to 23S rRNA. Forms part of two intersubunit bridges in the 70S ribosome. In Corynebacterium efficiens (strain DSM 44549 / YS-314 / AJ 12310 / JCM 11189 / NBRC 100395), this protein is Large ribosomal subunit protein uL14.